Consider the following 180-residue polypeptide: Putative pre-16S rRNA nuclease (180 aa).

Residues 1-12 (MDAQERSERPDP) are compositionally biased toward basic and acidic residues. The interval 1 to 23 (MDAQERSERPDPATDPGRGRRLG) is disordered.

It belongs to the YqgF nuclease family.

It is found in the cytoplasm. In terms of biological role, could be a nuclease involved in processing of the 5'-end of pre-16S rRNA. This is Putative pre-16S rRNA nuclease from Nocardia farcinica (strain IFM 10152).